Consider the following 419-residue polypeptide: 3-isopropylmalate dehydratase large subunit (419 aa).

[4Fe-4S] cluster-binding residues include Cys302, Cys362, and Cys365.

This sequence belongs to the aconitase/IPM isomerase family. LeuC type 2 subfamily. Heterodimer of LeuC and LeuD. [4Fe-4S] cluster serves as cofactor.

The catalysed reaction is (2R,3S)-3-isopropylmalate = (2S)-2-isopropylmalate. The protein operates within amino-acid biosynthesis; L-leucine biosynthesis; L-leucine from 3-methyl-2-oxobutanoate: step 2/4. Functionally, catalyzes the isomerization between 2-isopropylmalate and 3-isopropylmalate, via the formation of 2-isopropylmaleate. The chain is 3-isopropylmalate dehydratase large subunit from Sulfurimonas denitrificans (strain ATCC 33889 / DSM 1251) (Thiomicrospira denitrificans (strain ATCC 33889 / DSM 1251)).